Consider the following 136-residue polypeptide: Large ribosomal subunit protein uL16 (136 aa).

This sequence belongs to the universal ribosomal protein uL16 family. As to quaternary structure, part of the 50S ribosomal subunit.

Binds 23S rRNA and is also seen to make contacts with the A and possibly P site tRNAs. This chain is Large ribosomal subunit protein uL16, found in Citrobacter koseri (strain ATCC BAA-895 / CDC 4225-83 / SGSC4696).